The following is a 70-amino-acid chain: Exodeoxyribonuclease 7 small subunit (70 aa).

This sequence belongs to the XseB family. Heterooligomer composed of large and small subunits.

Its subcellular location is the cytoplasm. The catalysed reaction is Exonucleolytic cleavage in either 5'- to 3'- or 3'- to 5'-direction to yield nucleoside 5'-phosphates.. Bidirectionally degrades single-stranded DNA into large acid-insoluble oligonucleotides, which are then degraded further into small acid-soluble oligonucleotides. This is Exodeoxyribonuclease 7 small subunit from Streptococcus gordonii (strain Challis / ATCC 35105 / BCRC 15272 / CH1 / DL1 / V288).